The following is a 393-amino-acid chain: Acetylornithine aminotransferase (393 aa).

Pyridoxal 5'-phosphate is bound by residues 96–97 (GT) and Phe-129. Arg-132 contributes to the N(2)-acetyl-L-ornithine binding site. Residue 214-217 (DEVQ) coordinates pyridoxal 5'-phosphate. Lys-243 is subject to N6-(pyridoxal phosphate)lysine. Ser-271 lines the N(2)-acetyl-L-ornithine pocket. Thr-272 contacts pyridoxal 5'-phosphate.

It belongs to the class-III pyridoxal-phosphate-dependent aminotransferase family. ArgD subfamily. As to quaternary structure, homodimer. Pyridoxal 5'-phosphate is required as a cofactor.

The protein resides in the cytoplasm. The catalysed reaction is N(2)-acetyl-L-ornithine + 2-oxoglutarate = N-acetyl-L-glutamate 5-semialdehyde + L-glutamate. It functions in the pathway amino-acid biosynthesis; L-arginine biosynthesis; N(2)-acetyl-L-ornithine from L-glutamate: step 4/4. This is Acetylornithine aminotransferase from Rhodobacter capsulatus (strain ATCC BAA-309 / NBRC 16581 / SB1003).